A 277-amino-acid polypeptide reads, in one-letter code: Caspase-3 (277 aa).

N-acetylmethionine is present on methionine 1. 2 propeptides span residues 1–9 (MENTENSVD) and 10–28 (AKSF…KSMD). Lysine 11 is modified (N6-acetyllysine). Residue serine 26 is modified to Phosphoserine. Active-site residues include histidine 121 and cysteine 163. Cysteine 163 carries the S-nitrosocysteine; in inhibited form modification.

The protein belongs to the peptidase C14A family. In terms of assembly, heterotetramer that consists of two anti-parallel arranged heterodimers, each one formed by a 17 kDa (p17) and a 12 kDa (p12) subunit. Interacts with BIRC6/bruce. In terms of processing, cleavage by granzyme B, caspase-6, caspase-8 and caspase-10 generates the two active subunits. Additional processing of the propeptides is likely due to the autocatalytic activity of the activated protease. Active heterodimers between the small subunit of caspase-7 protease and the large subunit of caspase-3 also occur and vice versa. Post-translationally, S-nitrosylated on its catalytic site cysteine in unstimulated cell lines and denitrosylated upon activation of the Fas apoptotic pathway, associated with an increase in intracellular caspase activity. Fas therefore activates caspase-3 not only by inducing the cleavage of the caspase zymogen to its active subunits, but also by stimulating the denitrosylation of its active site thiol. Ubiquitinated by BIRC6; this activity is inhibited by DIABLO/SMAC.

It is found in the cytoplasm. It carries out the reaction Strict requirement for an Asp residue at positions P1 and P4. It has a preferred cleavage sequence of Asp-Xaa-Xaa-Asp-|- with a hydrophobic amino-acid residue at P2 and a hydrophilic amino-acid residue at P3, although Val or Ala are also accepted at this position.. Inhibited by BIRC6; following inhibition of BIRC6-caspase binding by DIABLO/SMAC, BIRC6 is subjected to caspase cleavage, leading to an increase in active caspases. Its function is as follows. Involved in the activation cascade of caspases responsible for apoptosis execution. At the onset of apoptosis, it proteolytically cleaves poly(ADP-ribose) polymerase PARP1 at a '216-Asp-|-Gly-217' bond. Cleaves and activates sterol regulatory element binding proteins (SREBPs) between the basic helix-loop-helix leucine zipper domain and the membrane attachment domain. Cleaves and activates caspase-6, -7 and -9 (CASP6, CASP7 and CASP9, respectively). Cleaves and inactivates interleukin-18 (IL18). Triggers cell adhesion in sympathetic neurons through RET cleavage. Cleaves IL-1 beta between an Asp and an Ala, releasing the mature cytokine which is involved in a variety of inflammatory processes. Cleaves and inhibits serine/threonine-protein kinase AKT1 in response to oxidative stress. Acts as an inhibitor of type I interferon production during virus-induced apoptosis by mediating cleavage of antiviral proteins CGAS, IRF3 and MAVS, thereby preventing cytokine overproduction. Also involved in pyroptosis by mediating cleavage and activation of gasdermin-E (GSDME). Cleaves XRCC4 and phospholipid scramblase proteins XKR4, XKR8 and XKR9, leading to promote phosphatidylserine exposure on apoptotic cell surface. Cleaves BIRC6 following inhibition of BIRC6-caspase binding by DIABLO/SMAC. The protein is Caspase-3 (CASP3) of Canis lupus familiaris (Dog).